Here is a 399-residue protein sequence, read N- to C-terminus: MWETKINPNKVFELRCKNTTYFGIGSIKKIKDILEVLKNKGINNVILVTGKGSYKASGAWDVVKPALETLGFKYSLYDKVGPNPTVDMIDEAAKIGRETGAKAVIGIGGGSPIDTAKSVAVLLEYTDKNARELYEQKFIPEKAAPIIAINLTHGTGTEVDRFAVATIPEKNYKPAIAYDCLYPMYAIDDPSLMTKLDKKQTIAVTIDALNHVTEAATTLVASPYSVLMAKETVRLIVRYLPAAVNDPENLVARYYLLYASALAGISFDNGLLHLTHALEHPLSAVKPEIAHGLGLGAILPAVVKAIYPSVAEVLAEVYSPIVPGLKGLPAEAEYVAKKVEEWLFKVGCTQKLSDFGFTKEDIPTLVRLAKTTPSLDGLLSNAPVEATEAVIAKIYEESF.

The protein belongs to the iron-containing alcohol dehydrogenase family. In terms of assembly, homotetramer. Zn(2+) serves as cofactor.

The enzyme catalyses a primary alcohol + NADP(+) = an aldehyde + NADPH + H(+). In terms of biological role, alcohol dehydrogenase active against primary long-chain alcohols. Pentan-1-ol is the optimum substrate in vitro, but also shows efficient dehydrogenase activity on propanol, hexanol, and ethanol. The protein is Long-chain primary alcohol dehydrogenase AdhA (adhA) of Thermoanaerobacter ethanolicus (Clostridium thermohydrosulfuricum).